The chain runs to 496 residues: MSQPCKDSDAKLRAACDRCHELKIRCTRTGGTESRCDRCEKNDIDCVYRAHRRIGRPKSQKSRCGPNTTARQNDTTTRGRIQQEQQEQMDISPPENRDSINSDFDFSIFEASGAVEWHRSSDVINVSTHQVSSTHPPFISPDCSLSHESSMSQTGSGSPFSMLNIGTMPVCDLDLSTLHGYGPSTDLVRSINHRSGSENESMEGNAELQSTQSASGSPQEEDQMLEDRLLRHQAKLRCLYSTVDATRNLISTTNDTVSHGAPLDKVLEAIMELVEILQTNANHTSSSSSSNSTTVDGPSEIRNQSRSRQDIANFNDIAILHVSISYAYIVKILAPIILSLEKSSVPVGSTSSSTYNDTTAHPSSASLPSQTGGPTKPRTVSVSLGSFSLASKPALNAQILLGMISRMLDQLHDATQPILMQVRHHHVPTQPVALQEREHHDAAMTREQHVSTGHGPDRHTSPVLSSAQAAVDSIRNEEKELLAKLNKVGNSTSATW.

The segment at residues 16 to 46 (CDRCHELKIRCTRTGGTESRCDRCEKNDIDC) is a DNA-binding region (zn(2)-C6 fungal-type). Disordered stretches follow at residues 57–102 (PKSQ…SINS), 189–224 (RSINHRSGSENESMEGNAELQSTQSASGSPQEEDQM), 281–307 (ANHTSSSSSSNSTTVDGPSEIRNQSRS), 348–379 (GSTSSSTYNDTTAHPSSASLPSQTGGPTKPRT), and 444–470 (MTREQHVSTGHGPDRHTSPVLSSAQAA). Composition is skewed to polar residues over residues 65–89 (GPNTTARQNDTTTRGRIQQEQQEQM) and 207–218 (ELQSTQSASGSP). A compositionally biased stretch (low complexity) spans 281-294 (ANHTSSSSSSNSTT). A compositionally biased stretch (polar residues) spans 355-379 (YNDTTAHPSSASLPSQTGGPTKPRT). The span at 444-460 (MTREQHVSTGHGPDRHT) shows a compositional bias: basic and acidic residues.

Its subcellular location is the nucleus. Its function is as follows. Transcription regulator that specifically up-regulates the gene cluster that mediates the biosynthesis of fusarielins F, G and H, decaketide compounds with 5 methylations and a decaline core that act as mycoestrogens as they stimulate growth of MCF-7 breast cancer cells. Probably binds the 5'-CGGNNNCCG-3' motif present in the promoter of all the cluster genes. This is Fusarielin biosynthesis cluster transcription factor FSL7 from Gibberella zeae (strain ATCC MYA-4620 / CBS 123657 / FGSC 9075 / NRRL 31084 / PH-1) (Wheat head blight fungus).